Consider the following 476-residue polypeptide: Glycogen synthase (476 aa).

Position 15 (K15) interacts with ADP-alpha-D-glucose.

The protein belongs to the glycosyltransferase 1 family. Bacterial/plant glycogen synthase subfamily.

The enzyme catalyses [(1-&gt;4)-alpha-D-glucosyl](n) + ADP-alpha-D-glucose = [(1-&gt;4)-alpha-D-glucosyl](n+1) + ADP + H(+). The protein operates within glycan biosynthesis; glycogen biosynthesis. Its function is as follows. Synthesizes alpha-1,4-glucan chains using ADP-glucose. This is Glycogen synthase from Bacillus cereus (strain ATCC 10987 / NRS 248).